The chain runs to 200 residues: Serine/threonine-protein kinase mos (200 aa).

A Protein kinase domain is found at 2 to 200 (LCLLQPLGSG…ELLKGERVTA (199 aa)). Residues 8–16 (LGSGGFGSV) and lysine 29 contribute to the ATP site. Residue aspartate 143 is the Proton acceptor of the active site.

Belongs to the protein kinase superfamily. Ser/Thr protein kinase family.

It carries out the reaction L-seryl-[protein] + ATP = O-phospho-L-seryl-[protein] + ADP + H(+). The catalysed reaction is L-threonyl-[protein] + ATP = O-phospho-L-threonyl-[protein] + ADP + H(+). The sequence is that of Serine/threonine-protein kinase mos (MOS) from Apteryx australis (Southern brown kiwi).